Here is a 177-residue protein sequence, read N- to C-terminus: Large ribosomal subunit protein uL6 (177 aa).

Belongs to the universal ribosomal protein uL6 family. Part of the 50S ribosomal subunit.

This protein binds to the 23S rRNA, and is important in its secondary structure. It is located near the subunit interface in the base of the L7/L12 stalk, and near the tRNA binding site of the peptidyltransferase center. The sequence is that of Large ribosomal subunit protein uL6 from Hydrogenovibrio crunogenus (strain DSM 25203 / XCL-2) (Thiomicrospira crunogena).